We begin with the raw amino-acid sequence, 62 residues long: Large ribosomal subunit protein uL29 (62 aa).

The protein belongs to the universal ribosomal protein uL29 family.

The sequence is that of Large ribosomal subunit protein uL29 from Desulfatibacillum aliphaticivorans.